An 80-amino-acid chain; its full sequence is Nuclear protein 1 (80 aa).

Residues 40-80 (GGRKGRTKREAAANTNRPSPGGHERKLLTKFQNSERKKAWR) are disordered. A compositionally biased stretch (basic and acidic residues) spans 61–80 (GHERKLLTKFQNSERKKAWR). The Nuclear localization signal signature appears at 64–80 (RKLLTKFQNSERKKAWR).

Belongs to the NUPR family. As to quaternary structure, monomer. Directly interacts with MSL1 and binds MORF4L1, two components of histone acetyltransferase complex; the interaction with MORF4L1 may be mediated by MSL1. Interacts with EP300; this interaction enhances the effect of EP300 on PAX2 transcription factor activity. Interacts with PAXIP1; this interaction prevents PAXIP1 inhibition of PAX2 transcription factor activity. Interacts with COPS5; this interaction allows COPS5-dependent CDKN1B nuclear to cytoplasm translocation. Interacts with RNF2. Interacts with FOXO3; this interaction represses FOXO3 transactivation. Interacts with PTMA; regulates apoptotic process. Interacts with MYOD1, EP300 and DDX5; this interaction coordinates the association of anti-proliferative and pro-myogenic proteins at the myogenin promoter. Interacts with TP53; interaction is stress-dependent. Forms a complex with EP300 and TP53; this complex binds CDKN1A promoter leading to transcriptional induction of CDKN1A. Post-translationally, phosphorylated. Phosphorylation promotes DNA-binding activity. In terms of processing, acetylated. Strongly activated in pancreatic acinar cells during the acute phase of pancreatitis, in developing pancreas and during pancreatic regeneration.

The protein localises to the nucleus. The protein resides in the cytoplasm. Its subcellular location is the perinuclear region. Transcription regulator that converts stress signals into a program of gene expression that empowers cells with resistance to the stress induced by a change in their microenvironment. Thereby participates in the regulation of many processes namely cell-cycle, apoptosis, autophagy and DNA repair responses. Controls cell cycle progression and protects cells from genotoxic stress induced by doxorubicin through the complex formation with TP53 and EP300 that binds CDKN1A promoter leading to transcriptional induction of CDKN1A. Protects pancreatic cancer cells from stress-induced cell death by binding the RELB promoter and activating its transcription, leading to IER3 transactivation. Negatively regulates apoptosis through interaction with PTMA. Inhibits autophagy-induced apoptosis in cardiac cells through FOXO3 interaction, inducing cytoplasmic translocation of FOXO3 thereby preventing the FOXO3 association with the pro-autophagic BNIP3 promoter. Inhibits cell growth and facilitates programmed cell death by apoptosis after adriamycin-induced DNA damage through transactivation of TP53. Regulates methamphetamine-induced apoptosis and autophagy through DDIT3-mediated endoplasmic reticulum stress pathway. Participates in DNA repair following gamma-irradiation by facilitating DNA access of the transcription machinery through interaction with MSL1 leading to inhibition of histone H4' Lys-16' acetylation (H4K16ac). Coactivator of PAX2 transcription factor activity, both by recruiting the EP300 cofactor to increase PAX2 transcription factor activity and by binding PAXIP1 to suppress PAXIP1-induced inhibition on PAX2. Positively regulates cell cycle progression through interaction with COPS5 inducing cytoplasmic translocation of CDKN1B leading to the CDKN1B degradation. Coordinates, through its interaction with EP300, the assiociation of MYOD1, EP300 and DDX5 to the MYOG promoter, leading to inhibition of cell-cycle progression and myogenic differentiation promotion. Negatively regulates beta cell proliferation via inhibition of cell-cycle regulatory genes expression through the suppression of their promoter activities. Also required for LHB expression and ovarian maturation. Exacerbates CNS inflammation and demyelination upon cuprizone treatment. In Rattus norvegicus (Rat), this protein is Nuclear protein 1.